Reading from the N-terminus, the 248-residue chain is Exosome complex component Rrp41 (248 aa).

Belongs to the RNase PH family. Rrp41 subfamily. In terms of assembly, component of the archaeal exosome complex. Forms a hexameric ring-like arrangement composed of 3 Rrp41-Rrp42 heterodimers. The hexameric ring associates with a trimer of Rrp4 and/or Csl4 subunits.

The protein localises to the cytoplasm. In terms of biological role, catalytic component of the exosome, which is a complex involved in RNA degradation. Has 3'-&gt;5' exoribonuclease activity. Can also synthesize heteromeric RNA-tails. Binds RNA. The chain is Exosome complex component Rrp41 from Saccharolobus solfataricus (strain ATCC 35092 / DSM 1617 / JCM 11322 / P2) (Sulfolobus solfataricus).